The primary structure comprises 465 residues: Probable inactive receptor-like kinase BSK12 (465 aa).

Polar residues predominate over residues 1–12 (MGCCYSLSSTVD). Residues 1–34 (MGCCYSLSSTVDPVQDHTTDASSEPRNGGGEDPP) form a disordered region. G2 is lipidated: N-myristoyl glycine. 2 S-palmitoyl cysteine lipidation sites follow: C3 and C4. Positions 50-291 (FSPENIVSDQ…KEIVATLETL (242 aa)) constitute a Protein kinase domain. Residues 56-64 (VSDQTSDVV) and K78 each bind ATP.

It belongs to the protein kinase superfamily. Ser/Thr protein kinase family. As to quaternary structure, interacts with YDA. In terms of processing, diacylation-mediated membrane association is essential for BSK12 function. Expressed at the mRNA level in the sperm cells in mature pollen, but the protein is only detectable in the zygote and the micropylar endosperm upon fertilization.

The protein localises to the cell membrane. In terms of biological role, probable inactive protein kinase that activates the YODA MAP kinase cascade, which regulates the asymmetric first division and embryo polarity, by promoting the elongation of the zygote and the development of its basal daughter cell into the extra-embryonic suspensor. Acts as an adapter at the plasma membrane, possibly by recruiting and binding an activator. The protein is Probable inactive receptor-like kinase BSK12 of Arabidopsis thaliana (Mouse-ear cress).